A 435-amino-acid chain; its full sequence is U-box domain-containing protein 21 (435 aa).

In terms of domain architecture, U-box spans Thr30–Pro104. ARM repeat units lie at residues Leu202–Ser241, Thr245–Leu285, Pro288–Glu327, and Glu329–Lys369.

The enzyme catalyses S-ubiquitinyl-[E2 ubiquitin-conjugating enzyme]-L-cysteine + [acceptor protein]-L-lysine = [E2 ubiquitin-conjugating enzyme]-L-cysteine + N(6)-ubiquitinyl-[acceptor protein]-L-lysine.. It functions in the pathway protein modification; protein ubiquitination. Functions as an E3 ubiquitin ligase. The protein is U-box domain-containing protein 21 (PUB21) of Arabidopsis thaliana (Mouse-ear cress).